The following is a 368-amino-acid chain: MTSGSLQFTVLRAVNPATDAQRESMLREPGFGKYHTDHMVSIDYAEGRGWHNARVIPYGPIELDPSAIVLHYAQEVFEGLKAYRWADGSIVSFRADANAARLRSSARRLAIPELPDAVFIESLRQLIAVDKAWVPGAGGEEALYLRPFIFATEPGLGVRPATQYRYLLIASPAGAYFKGGIAPVSVWVSTEYVRACPGGTGAAKFGGNYAASLLAQAEAAENGCDQVVWLDAVERRYIEEMGGMNIFFVLGSGGSARLVTPELSGSLLPGITRDSLLQLAIDAGFAVEERRIDIDEWQKKAAAGEITEVFACGTAAVITPVARVRHGASEFRIADGQPGEVTMALRDTLTGIQRGTFADTHGWMARLG.

Arginine 101 provides a ligand contact to pyridoxal 5'-phosphate. Position 204 is an N6-(pyridoxal phosphate)lysine (lysine 204). Pyridoxal 5'-phosphate-binding positions include tyrosine 209, 271–272 (IT), and threonine 314.

It belongs to the class-IV pyridoxal-phosphate-dependent aminotransferase family. In terms of assembly, homodimer. Pyridoxal 5'-phosphate is required as a cofactor.

It catalyses the reaction L-leucine + 2-oxoglutarate = 4-methyl-2-oxopentanoate + L-glutamate. The enzyme catalyses L-isoleucine + 2-oxoglutarate = (S)-3-methyl-2-oxopentanoate + L-glutamate. It carries out the reaction L-valine + 2-oxoglutarate = 3-methyl-2-oxobutanoate + L-glutamate. It functions in the pathway amino-acid biosynthesis; L-isoleucine biosynthesis; L-isoleucine from 2-oxobutanoate: step 4/4. It participates in amino-acid biosynthesis; L-leucine biosynthesis; L-leucine from 3-methyl-2-oxobutanoate: step 4/4. The protein operates within amino-acid biosynthesis; L-valine biosynthesis; L-valine from pyruvate: step 4/4. Functionally, catalyzes the reversible transfers of an amino group from glutamate to the alpha-ketoacid of the respective amino acid in the final step in the biosynthesis of branchedchain amino acids. The polypeptide is Branched-chain-amino-acid aminotransferase (ilvE) (Mycobacterium tuberculosis (strain CDC 1551 / Oshkosh)).